A 344-amino-acid chain; its full sequence is Biotin synthase (344 aa).

A Radical SAM core domain is found at 40–267; the sequence is AEVQVSTLLS…KSMVRLSAGR (228 aa). [4Fe-4S] cluster contacts are provided by Cys55, Cys59, and Cys62. Positions 99, 130, 190, and 262 each coordinate [2Fe-2S] cluster.

The protein belongs to the radical SAM superfamily. Biotin synthase family. As to quaternary structure, homodimer. The cofactor is [4Fe-4S] cluster. Requires [2Fe-2S] cluster as cofactor.

The catalysed reaction is (4R,5S)-dethiobiotin + (sulfur carrier)-SH + 2 reduced [2Fe-2S]-[ferredoxin] + 2 S-adenosyl-L-methionine = (sulfur carrier)-H + biotin + 2 5'-deoxyadenosine + 2 L-methionine + 2 oxidized [2Fe-2S]-[ferredoxin]. It functions in the pathway cofactor biosynthesis; biotin biosynthesis; biotin from 7,8-diaminononanoate: step 2/2. Functionally, catalyzes the conversion of dethiobiotin (DTB) to biotin by the insertion of a sulfur atom into dethiobiotin via a radical-based mechanism. The chain is Biotin synthase from Xanthomonas oryzae pv. oryzae (strain PXO99A).